We begin with the raw amino-acid sequence, 102 residues long: Heat shock protein HspQ (102 aa).

This sequence belongs to the HspQ family.

It is found in the cytoplasm. Involved in the degradation of certain denaturated proteins, including DnaA, during heat shock stress. The polypeptide is Heat shock protein HspQ (Pectobacterium atrosepticum (strain SCRI 1043 / ATCC BAA-672) (Erwinia carotovora subsp. atroseptica)).